A 274-amino-acid chain; its full sequence is MITFPNAKINLGLNITEKRPDGYHNLETVFYPIPLEDALEITILNDSKQKFVLHQSGLEISGEPETNLVVKAYLLLEQEFQLPPVDIYLYKHIPSGAGLGGGSADAAFMLKLLNEKFNLHLADEKLEEYAAILGADCAFFIKNKPTFAEGIGNIFSPVDLSLKGYQLVLVKPDVFVSTRDAFSQIQPHYPDHSLKEIIRRPVSEWKNCMFNDFEKSVFPQYPVIEEIKKELYSKGAIYAAMSGSGSSVFGLFSPEEKITKMDFEAAFCFQTELK.

Residue Lys8 is part of the active site. Position 94-104 (Pro94–Ala104) interacts with ATP. Asp136 is a catalytic residue.

Belongs to the GHMP kinase family. IspE subfamily.

The catalysed reaction is 4-CDP-2-C-methyl-D-erythritol + ATP = 4-CDP-2-C-methyl-D-erythritol 2-phosphate + ADP + H(+). It participates in isoprenoid biosynthesis; isopentenyl diphosphate biosynthesis via DXP pathway; isopentenyl diphosphate from 1-deoxy-D-xylulose 5-phosphate: step 3/6. Its function is as follows. Catalyzes the phosphorylation of the position 2 hydroxy group of 4-diphosphocytidyl-2C-methyl-D-erythritol. The polypeptide is 4-diphosphocytidyl-2-C-methyl-D-erythritol kinase (Bacteroides fragilis (strain YCH46)).